An 891-amino-acid chain; its full sequence is Inter-alpha-trypsin inhibitor heavy chain H3 (891 aa).

Positions 1–20 are cleaved as a signal peptide; it reads MALAQWPYLILALLSGLAVS. Positions 21–34 are excised as a propeptide; that stretch reads GFPRNPSLLLGKRS. Positions 29–158 constitute a VIT domain; the sequence is LLGKRSLPGR…KVTFELTYEE (130 aa). Asn91 carries an N-linked (GlcNAc...) asparagine glycan. A VWFA domain is found at 284–467; the sequence is SVVFVIDVSG…LQLQGFYEEV (184 aa). The residue at position 651 (Asp651) is an Aspartate 1-(chondroitin 4-sulfate)-ester. A propeptide spanning residues 652-891 is cleaved from the precursor; that stretch reads PHFIIQIPEK…HRDYIVPNLF (240 aa).

The protein belongs to the ITIH family. In terms of assembly, I-alpha-I plasma protease inhibitors are assembled from one or two heavy chains (H1, H2 or H3) and one light chain, bikunin. Inter-alpha-inhibitor (I-alpha-I) is composed of H1, H2 and bikunin, inter-alpha-like inhibitor (I-alpha-LI) of H2 and bikunin, and pre-alpha-inhibitor (P-alpha-I) of H3 and bikunin.

It is found in the secreted. Its function is as follows. May act as a carrier of hyaluronan in serum or as a binding protein between hyaluronan and other matrix protein, including those on cell surfaces in tissues to regulate the localization, synthesis and degradation of hyaluronan which are essential to cells undergoing biological processes. This Bos taurus (Bovine) protein is Inter-alpha-trypsin inhibitor heavy chain H3 (ITIH3).